The sequence spans 87 residues: Co-chaperonin GroES (87 aa).

Belongs to the GroES chaperonin family. As to quaternary structure, heptamer of 7 subunits arranged in a ring. Interacts with the chaperonin GroEL.

The protein localises to the cytoplasm. In terms of biological role, together with the chaperonin GroEL, plays an essential role in assisting protein folding. The GroEL-GroES system forms a nano-cage that allows encapsulation of the non-native substrate proteins and provides a physical environment optimized to promote and accelerate protein folding. GroES binds to the apical surface of the GroEL ring, thereby capping the opening of the GroEL channel. The polypeptide is Co-chaperonin GroES (Campylobacter hominis (strain ATCC BAA-381 / DSM 21671 / CCUG 45161 / LMG 19568 / NCTC 13146 / CH001A)).